The following is a 317-amino-acid chain: Homoserine O-acetyltransferase (317 aa).

The active-site Acyl-thioester intermediate is cysteine 142. Substrate is bound by residues lysine 163 and serine 192. Histidine 235 serves as the catalytic Proton acceptor. Residue glutamate 237 is part of the active site. A substrate-binding site is contributed by arginine 249.

This sequence belongs to the MetA family.

It is found in the cytoplasm. It carries out the reaction L-homoserine + acetyl-CoA = O-acetyl-L-homoserine + CoA. It functions in the pathway amino-acid biosynthesis; L-methionine biosynthesis via de novo pathway; O-acetyl-L-homoserine from L-homoserine: step 1/1. Functionally, transfers an acetyl group from acetyl-CoA to L-homoserine, forming acetyl-L-homoserine. The sequence is that of Homoserine O-acetyltransferase from Rhizorhabdus wittichii (strain DSM 6014 / CCUG 31198 / JCM 15750 / NBRC 105917 / EY 4224 / RW1) (Sphingomonas wittichii).